The primary structure comprises 735 residues: MATKLFPKFSQGLAQDPTTRRIWFGLAVAHDFESHDGMTEENLYQKIFASHFGQLAIIFLWTSGNLFHVAWQGNFEQWGADPIHVRPIAHAIWDPHFGQPAVEAFTRGGASGPVNISTSGLYQWWYTIGMRTNQDLYVGSVFLALVSAIFLFAGWLHLQPSFQPSLSWFKDAESRLNHHLSGLFGVSSLAWTGHLVHVAIPESRGKHVGWDNFLTQLPHPQGLTPFWTGNWAAYAQNPDSASHIFGTSDGAGEAILTFLGGFHPQTQSLWLTDMAHHHLAIAVLFIVAGHMYRTNFGIGHRMSAILDAHVAPSGRLGAGHKGLFETVNNSLHFQLGLALASVGTICSLVAQHMYSLPPYAFLANDFTTQAALYTHHQYIAGFIMCGAFAHGAIFWIRDYDPEQNKGNVLSRMLDHKEAIISHLSWVSLFLGFHTLGLYVHNDVMLAFGTPEKQILIEPVFAQWIQAAHGKAFYGFDLLLSSSSSSASSASQTLWLPGWLDAINNNQNSLFLTIGPGDFLVHHAIALGLHTTTLILVKGALDARGSKLMPDKKDFGYSFPCDGPGRGGTCDISAYDAFYLAVFWMLNTIGWVTFYWHWKHLTLWQGNVSQFDESSTYLMGWLRDYLWLNSSQLINGYNPFGMNSLSVWAWMFLAGHLVYATGFMFLISWRGYWQELIETLVWAHEKTPLANLVYWKDKPVALSIVQARLVGLAHFSVGYVFTYAAFVIASTSGKFG.

A run of 8 helical transmembrane segments spans residues 47–70 (IFASHFGQLAIIFLWTSGNLFHVA), 136–159 (LYVGSVFLALVSAIFLFAGWLHLQ), 176–200 (LNHHLSGLFGVSSLAWTGHLVHVAI), 274–292 (MAHHHLAIAVLFIVAGHMY), 331–354 (LHFQLGLALASVGTICSLVAQHMY), 370–396 (AALYTHHQYIAGFIMCGAFAHGAIFWI), 418–440 (AIISHLSWVSLFLGFHTLGLYVH), and 518–536 (FLVHHAIALGLHTTTLILV). Positions 560 and 569 each coordinate [4Fe-4S] cluster. 2 helical membrane passes run 576–597 (AFYLAVFWMLNTIGWVTFYWHW) and 644–666 (LSVWAWMFLAGHLVYATGFMFLI). Positions 655, 663, and 671 each coordinate chlorophyll a. Tryptophan 672 provides a ligand contact to phylloquinone. The helical transmembrane segment at 708-728 (LVGLAHFSVGYVFTYAAFVIA) threads the bilayer.

This sequence belongs to the PsaA/PsaB family. The PsaA/B heterodimer binds the P700 chlorophyll special pair and subsequent electron acceptors. PSI consists of a core antenna complex that captures photons, and an electron transfer chain that converts photonic excitation into a charge separation. The eukaryotic PSI reaction center is composed of at least 11 subunits. The cofactor is P700 is a chlorophyll a/chlorophyll a' dimer, A0 is one or more chlorophyll a, A1 is one or both phylloquinones and FX is a shared 4Fe-4S iron-sulfur center..

The protein localises to the plastid. The protein resides in the chloroplast thylakoid membrane. It carries out the reaction reduced [plastocyanin] + hnu + oxidized [2Fe-2S]-[ferredoxin] = oxidized [plastocyanin] + reduced [2Fe-2S]-[ferredoxin]. Its function is as follows. PsaA and PsaB bind P700, the primary electron donor of photosystem I (PSI), as well as the electron acceptors A0, A1 and FX. PSI is a plastocyanin/cytochrome c6-ferredoxin oxidoreductase, converting photonic excitation into a charge separation, which transfers an electron from the donor P700 chlorophyll pair to the spectroscopically characterized acceptors A0, A1, FX, FA and FB in turn. Oxidized P700 is reduced on the lumenal side of the thylakoid membrane by plastocyanin or cytochrome c6. In Tetradesmus obliquus (Green alga), this protein is Photosystem I P700 chlorophyll a apoprotein A2.